The chain runs to 379 residues: Sulfate adenylyltransferase (379 aa).

It belongs to the sulfate adenylyltransferase family.

The enzyme catalyses sulfate + ATP + H(+) = adenosine 5'-phosphosulfate + diphosphate. It participates in sulfur metabolism; hydrogen sulfide biosynthesis; sulfite from sulfate: step 1/3. This chain is Sulfate adenylyltransferase, found in Thermococcus onnurineus (strain NA1).